We begin with the raw amino-acid sequence, 137 residues long: Large ribosomal subunit protein uL14 (137 aa).

Belongs to the universal ribosomal protein uL14 family. In terms of assembly, component of the large ribosomal subunit. Mature ribosomes consist of a small (40S) and a large (60S) subunit. The 40S subunit contains about 32 different proteins and 1 molecule of RNA (18S). The 60S subunit contains 45 different proteins and 3 molecules of RNA (25S, 5.8S and 5S).

It is found in the cytoplasm. Its function is as follows. Component of the ribosome, a large ribonucleoprotein complex responsible for the synthesis of proteins in the cell. The small ribosomal subunit (SSU) binds messenger RNAs (mRNAs) and translates the encoded message by selecting cognate aminoacyl-transfer RNA (tRNA) molecules. The large subunit (LSU) contains the ribosomal catalytic site termed the peptidyl transferase center (PTC), which catalyzes the formation of peptide bonds, thereby polymerizing the amino acids delivered by tRNAs into a polypeptide chain. The nascent polypeptides leave the ribosome through a tunnel in the LSU and interact with protein factors that function in enzymatic processing, targeting, and the membrane insertion of nascent chains at the exit of the ribosomal tunnel. The sequence is that of Large ribosomal subunit protein uL14 from Candida albicans (strain SC5314 / ATCC MYA-2876) (Yeast).